The chain runs to 929 residues: Isoleucine--tRNA ligase (929 aa).

Positions Pro58 to His68 match the 'HIGH' region motif. Glu563 contributes to the L-isoleucyl-5'-AMP binding site. The short motif at Lys605–Ser609 is the 'KMSKS' region element. Lys608 contributes to the ATP binding site. Zn(2+) contacts are provided by Cys892, Cys895, Cys912, and Cys915.

It belongs to the class-I aminoacyl-tRNA synthetase family. IleS type 1 subfamily. In terms of assembly, monomer. Zn(2+) is required as a cofactor.

The protein resides in the cytoplasm. It carries out the reaction tRNA(Ile) + L-isoleucine + ATP = L-isoleucyl-tRNA(Ile) + AMP + diphosphate. Catalyzes the attachment of isoleucine to tRNA(Ile). As IleRS can inadvertently accommodate and process structurally similar amino acids such as valine, to avoid such errors it has two additional distinct tRNA(Ile)-dependent editing activities. One activity is designated as 'pretransfer' editing and involves the hydrolysis of activated Val-AMP. The other activity is designated 'posttransfer' editing and involves deacylation of mischarged Val-tRNA(Ile). The chain is Isoleucine--tRNA ligase from Neisseria meningitidis serogroup C (strain 053442).